A 321-amino-acid polypeptide reads, in one-letter code: Peroxidase 4 (321 aa).

The signal sequence occupies residues 1 to 25 (MASSSFSIVVVALGVLALFAGSSSA). Position 26 is a pyrrolidone carboxylic acid (Gln26). 4 disulfide bridges follow: Cys36–Cys116, Cys69–Cys74, Cys122–Cys317, and Cys201–Cys226. The active-site Proton acceptor is the His67. Ca(2+) contacts are provided by Asp68, Val71, Gly73, Asp75, and Ser77. Pro164 contributes to the substrate binding site. His194 serves as a coordination point for heme b. Thr195 is a Ca(2+) binding site. N-linked (GlcNAc...) asparagine glycosylation is present at Asn210. Positions 241, 244, and 249 each coordinate Ca(2+).

The protein belongs to the peroxidase family. Classical plant (class III) peroxidase subfamily. Heme b is required as a cofactor. Ca(2+) serves as cofactor.

The protein localises to the secreted. It catalyses the reaction 2 a phenolic donor + H2O2 = 2 a phenolic radical donor + 2 H2O. In terms of biological role, removal of H(2)O(2), oxidation of toxic reductants, biosynthesis and degradation of lignin, suberization, auxin catabolism, response to environmental stresses such as wounding, pathogen attack and oxidative stress. These functions might be dependent on each isozyme/isoform in each plant tissue. The sequence is that of Peroxidase 4 from Vitis vinifera (Grape).